The sequence spans 597 residues: Protein kinase C-like 3 (597 aa).

Positions 12 to 95 constitute a PB1 domain; the sequence is DIKLKTRFHG…AELNIHVFVG (84 aa). Residues 127 to 177 form a Phorbol-ester/DAG-type zinc finger; the sequence is GHRFQGKRLNRRIQCFICHDYIWGIGRQGFRCVDCRLCVHKKCHRHVRTHC. The segment at 181 to 238 is disordered; it reads PQGPNVPVAPSSGVGSLRGGRLDTSSSTTRSGGGIDNGAFHEHEIESPGSAKDMSRST. The region spanning 253–522 is the Protein kinase domain; sequence FRLLTVIGRG…LNDMKEHDFF (270 aa). Residues 259–267 and Lys282 contribute to the ATP site; that span reads IGRGSYAKV. Residue Asp377 is the Proton acceptor of the active site. In terms of domain architecture, AGC-kinase C-terminal spans 524–595; the sequence is GFIDWEALEQ…VNPLQMSRED (72 aa).

Belongs to the protein kinase superfamily. AGC Ser/Thr protein kinase family. PKC subfamily. As to quaternary structure, interaction with par-3 required for the peripheral localization of par-6 and to form a par-3/par-6/pkc-3 complex, which is activated when cdc-42 interacts with par-6. Binds avidly to the phosphotyrosine interaction domain (PID) of a novel pkc-3 adapter protein num-1, which enables tethering and targeting of pkc-3 to the cell periphery. Requires Mg(2+) as cofactor.

It localises to the cytoplasm. The protein resides in the cytoskeleton. The enzyme catalyses L-seryl-[protein] + ATP = O-phospho-L-seryl-[protein] + ADP + H(+). The catalysed reaction is L-threonyl-[protein] + ATP = O-phospho-L-threonyl-[protein] + ADP + H(+). In terms of biological role, required for the normal progression of embryogenesis and viability of the organism. Plays an indispensable role in establishing embryonic polarity and in recruiting and maintaining par-6 to the periphery, through interaction with par-3. Required for epithelial cell polarity in the distal spermatheca. Phosphorylates serine residues of num-1. Required for the expression of antimicrobial peptide nlp-29 in response in response to fungal infection or physical injury. The sequence is that of Protein kinase C-like 3 from Caenorhabditis briggsae.